The chain runs to 98 residues: Transcription elongation factor A protein-like 7 (98 aa).

Over residues 1–22 (MQKSCNEKEGKPKGSEAKREDE) the composition is skewed to basic and acidic residues. The tract at residues 1 to 33 (MQKSCNEKEGKPKGSEAKREDEQPCGALEGQRL) is disordered. A coiled-coil region spans residues 59 to 89 (GEEMTGEEEEMERCLEEIRSLRKKFRALHSN).

Belongs to the TFS-II family. TFA subfamily.

It is found in the nucleus. Its function is as follows. Plays a role in the negative regulation of NF-kappa-B signaling at the basal level by modulating transcriptional activity of NF-kappa-B on its target gene promoters. Associates with cyclin D1 promoter containing Myc E-box sequence and transcriptionally represses cyclin D1 expression. Regulates telomerase reverse transcriptase expression and telomerase activity in both ALT (alternative lengthening of telomeres)and telomerase-positive cell lines. The protein is Transcription elongation factor A protein-like 7 (Tceal7) of Mus musculus (Mouse).